We begin with the raw amino-acid sequence, 380 residues long: Lipid-A-disaccharide synthase (380 aa).

It belongs to the LpxB family.

It carries out the reaction a lipid X + a UDP-2-N,3-O-bis[(3R)-3-hydroxyacyl]-alpha-D-glucosamine = a lipid A disaccharide + UDP + H(+). Its pathway is bacterial outer membrane biogenesis; LPS lipid A biosynthesis. In terms of biological role, condensation of UDP-2,3-diacylglucosamine and 2,3-diacylglucosamine-1-phosphate to form lipid A disaccharide, a precursor of lipid A, a phosphorylated glycolipid that anchors the lipopolysaccharide to the outer membrane of the cell. The polypeptide is Lipid-A-disaccharide synthase (Francisella philomiragia subsp. philomiragia (strain ATCC 25017 / CCUG 19701 / FSC 153 / O#319-036)).